The chain runs to 825 residues: Probable phosphoketolase (825 aa).

This sequence belongs to the XFP family. Requires thiamine diphosphate as cofactor.

In Schizosaccharomyces pombe (strain 972 / ATCC 24843) (Fission yeast), this protein is Probable phosphoketolase.